The following is a 570-amino-acid chain: MRVSKYLLSTQKETPANAEVISHQLMLRAGMIRRNASGLYSYLPTGLRVLRKVEAIVREEMNKAGAIEILMPMVQPADLWVETGRWDKFGPELLRFKDRHNRDFVLGPTHEEVITDLIRKEVSSYKQLPLNLYQIQTKFRDEVRPRFGVMRSREFLMKDAYSFHLDVDTMNETYEAMYQAYSNILSRMGLAFRPVLADTGSIGGSMSHEFHVLAQSGEDLIAYSTGSDYAANIEKAESPMPTEARGAATEALRLVDTPNAKTIAELVEQFGLDITKTVKTLIVKGATEEAPLVALIVRGDHELNEIKADKLDLVASPLEFAPEALIRDAIGAGPGSLGPVGLNMPVIIDHSVSVMSDFAAGANLDDKHYFGINWERDLPLAQAADIRNVVEGEPTPDGLGTYAMARGIEVGHIFQLGTNYSKSMNATVLDENGKSQVLLMGCYGVGVSRIVAAAIEQNFDDRGIVWPEAIAPFSVGILPMNMHKSHRVTDIAEQLYKDLSAVGIDVLLDDRKERPGVMFADMELIGIPHTVVIGDRNIDAGVFEYKNRRTGEKQDVPFDQIVDFLKNLQA.

It belongs to the class-II aminoacyl-tRNA synthetase family. ProS type 1 subfamily. As to quaternary structure, homodimer.

It is found in the cytoplasm. It carries out the reaction tRNA(Pro) + L-proline + ATP = L-prolyl-tRNA(Pro) + AMP + diphosphate. Its function is as follows. Catalyzes the attachment of proline to tRNA(Pro) in a two-step reaction: proline is first activated by ATP to form Pro-AMP and then transferred to the acceptor end of tRNA(Pro). As ProRS can inadvertently accommodate and process non-cognate amino acids such as alanine and cysteine, to avoid such errors it has two additional distinct editing activities against alanine. One activity is designated as 'pretransfer' editing and involves the tRNA(Pro)-independent hydrolysis of activated Ala-AMP. The other activity is designated 'posttransfer' editing and involves deacylation of mischarged Ala-tRNA(Pro). The misacylated Cys-tRNA(Pro) is not edited by ProRS. In Shewanella sp. (strain ANA-3), this protein is Proline--tRNA ligase.